The following is a 404-amino-acid chain: MRSQPHVLGIVLAGGEGKRLYPLTADRAKPAVPFGGAYRLIDFVLSNLVNAGYLRLCVLTQYKSHSLDRHISQTWRLSGFAGEYITPVPAQQRLGPRWYTGSADAILQSLNLVYDEDPEYIVVFGADHVYRMDPEQMVQHHIESGAGVTVAGIRVPRSEAFAFGCIDSDESGRIVQFLEKPAHPPGTPDDPNMTFASMGNYVFTTKVLVDAIRADSENSDSDHDMGGDIIPALVEAGEASVYDFKDNIVPGATDRDRGYWRDVGTLDAFYDAHMDLVSVHPIFNLYNRRWPIRGETENLAPAKFVQGGLAQESVVGAGCILSAATVRNSVLSSNVMVDSGATVEGSVLMPGVRIGKGAVVRRAILDKNVVVGDGEIIGVDLERDKQRFAVSNGGVVAIGKGVWI.

Alpha-D-glucose 1-phosphate-binding positions include Tyr99, Gly164, 179-180 (EK), and Ser197.

The protein belongs to the bacterial/plant glucose-1-phosphate adenylyltransferase family. Homotetramer.

It carries out the reaction alpha-D-glucose 1-phosphate + ATP + H(+) = ADP-alpha-D-glucose + diphosphate. It participates in glycan biosynthesis; glycogen biosynthesis. In terms of biological role, involved in the biosynthesis of ADP-glucose, a building block required for the elongation reactions to produce glycogen. Catalyzes the reaction between ATP and alpha-D-glucose 1-phosphate (G1P) to produce pyrophosphate and ADP-Glc. The chain is Glucose-1-phosphate adenylyltransferase from Rhodococcus jostii (strain RHA1).